The chain runs to 53 residues: uncharacterized protein (53 aa).

A helical membrane pass occupies residues 18–38 (FLFFIFYFLFFFIFFTVFGNL).

It is found in the membrane. This is an uncharacterized protein from Dictyostelium discoideum (Social amoeba).